The primary structure comprises 74 residues: Large ribosomal subunit protein uL29 (74 aa).

Belongs to the universal ribosomal protein uL29 family.

The chain is Large ribosomal subunit protein uL29 from Streptomyces griseus subsp. griseus (strain JCM 4626 / CBS 651.72 / NBRC 13350 / KCC S-0626 / ISP 5235).